We begin with the raw amino-acid sequence, 172 residues long: MAKIQPKVQGDERDDGLREKMIAVNRVTKVVKGGRILGFAALTVVGDGDGRIGMGKGKAKEVPVAVQKAMDEARRKMVKVPLKNGTLQHEVIGKHGAAKVLMAPAKEGTGVIAGGPMRAIFEVMGVTNIVTKSHGSTNPYNMVRATLDGLRKMSTPAEIAAKRGKSVEEILG.

Residues 17–80 enclose the S5 DRBM domain; the sequence is LREKMIAVNR…DEARRKMVKV (64 aa).

Belongs to the universal ribosomal protein uS5 family. In terms of assembly, part of the 30S ribosomal subunit. Contacts proteins S4 and S8.

With S4 and S12 plays an important role in translational accuracy. Functionally, located at the back of the 30S subunit body where it stabilizes the conformation of the head with respect to the body. This Ralstonia nicotianae (strain ATCC BAA-1114 / GMI1000) (Ralstonia solanacearum) protein is Small ribosomal subunit protein uS5.